A 360-amino-acid polypeptide reads, in one-letter code: Proline-rich protein 11 (360 aa).

Disordered stretches follow at residues 20–43 (KKKE…SPER) and 174–201 (PPTL…PPLA). Residue Thr-33 is modified to Phosphothreonine. Ser-40 is modified (phosphoserine). Residues 175–201 (PTLPQPASHFPPPPPPPPLPPPPPPLA) show a composition bias toward pro residues. The Phosphodegron motif lies at 285–291 (LITPGKS). Residue Thr-287 is modified to Phosphothreonine. Ser-291 carries the phosphoserine modification. The short motif at 296–304 (RKLLRKVDV) is the D-box element. The KEN box motif lies at 316 to 318 (KEN). Residues 325-330 (LTPVMT) carry the Phosphodegron motif. A disordered region spans residues 340–360 (AHPRSPTPTLPLSTSSFDEQN). At Ser-344 the chain carries Phosphoserine. Residues Thr-346 and Thr-348 each carry the phosphothreonine modification. Positions 349–360 (LPLSTSSFDEQN) are enriched in low complexity.

Post-translationally, ubiquitinated. Rapidly degraded by the proteasome; degradation may involve FBXW7-specific phosphorylated phosphodegron motifs. In terms of tissue distribution, ubiquitously expressed.

It is found in the cytoplasm. The protein resides in the nucleus. Its function is as follows. Plays a critical role in cell cycle progression. The polypeptide is Proline-rich protein 11 (PRR11) (Homo sapiens (Human)).